The sequence spans 315 residues: Adenine deaminase (315 aa).

His14, His16, and His194 together coordinate Zn(2+). The active-site Proton donor is Glu197. Residue Asp275 coordinates Zn(2+). Asp276 contributes to the substrate binding site.

This sequence belongs to the metallo-dependent hydrolases superfamily. Adenosine and AMP deaminases family. Adenine deaminase type 2 subfamily. Requires Zn(2+) as cofactor.

It catalyses the reaction adenine + H2O + H(+) = hypoxanthine + NH4(+). In terms of biological role, catalyzes the hydrolytic deamination of adenine to hypoxanthine. Plays an important role in the purine salvage pathway and in nitrogen catabolism. The polypeptide is Adenine deaminase (Ectopseudomonas mendocina (strain ymp) (Pseudomonas mendocina)).